Consider the following 478-residue polypeptide: Secretogranin-3 (478 aa).

Positions 1 to 21 are cleaved as a signal peptide; the sequence is MASKRLGFVVVLALVCQHINA. Disordered regions lie at residues 22–126 and 208–287; these read FPTP…NGMD and IGDR…EDGL. Over residues 28–42 the composition is skewed to basic and acidic residues; it reads PDDKYNRELTEEKPL. Residues 63 to 74 are compositionally biased toward acidic residues; it reads AEEETNSEDDDI. A compositionally biased stretch (basic and acidic residues) spans 97-120; sequence ANERLGADDTDSTKNRRLADDYDS. Over residues 235-259 the composition is skewed to acidic residues; it reads DEEDEVENEGGDDANGDEPQEEESR.

It is found in the cytoplasmic vesicle. The protein localises to the secretory vesicle lumen. Its subcellular location is the secretory vesicle membrane. It localises to the secreted. The protein is Secretogranin-3 (scg3) of Danio rerio (Zebrafish).